A 305-amino-acid polypeptide reads, in one-letter code: NAD-dependent protein deacylase sirtuin-5, mitochondrial (305 aa).

The N-terminal 32 residues, 1–32, are a transit peptide targeting the mitochondrion; that stretch reads MIVRQLWCSRGSTSHLCAAVRLNWRSPKMTRP. Positions 33–303 constitute a Deacetylase sirtuin-type domain; the sequence is SSDLTAFREH…PPALERHESE (271 aa). 54 to 73 provides a ligand contact to NAD(+); the sequence is GAGVSAESGVPTFRGPGGFW. 2 residues coordinate substrate: Tyr98 and Arg101. 136-139 contacts NAD(+); the sequence is QNID. Residue His154 is the Proton acceptor of the active site. Residues Cys162, Cys165, Cys203, and Cys208 each coordinate Zn(2+). Residues 245 to 247, 271 to 273, and Cys289 each bind NAD(+); these read GTS and NME.

Belongs to the sirtuin family. Class III subfamily. It depends on Zn(2+) as a cofactor.

The protein resides in the mitochondrion. It localises to the cytoplasm. Its subcellular location is the cytosol. It is found in the nucleus. It catalyses the reaction N(6)-malonyl-L-lysyl-[protein] + NAD(+) + H2O = 2''-O-malonyl-ADP-D-ribose + nicotinamide + L-lysyl-[protein]. The catalysed reaction is N(6)-succinyl-L-lysyl-[protein] + NAD(+) + H2O = 2''-O-succinyl-ADP-D-ribose + nicotinamide + L-lysyl-[protein]. The enzyme catalyses N(6)-glutaryl-L-lysyl-[protein] + NAD(+) + H2O = 2''-O-glutaryl-ADP-D-ribose + nicotinamide + L-lysyl-[protein]. Its function is as follows. NAD-dependent lysine demalonylase, desuccinylase and deglutarylase that specifically removes malonyl, succinyl and glutaryl groups on target proteins. Has weak NAD-dependent protein deacetylase activity; however this activity may not be physiologically relevant in vivo. In Danio rerio (Zebrafish), this protein is NAD-dependent protein deacylase sirtuin-5, mitochondrial (sirt5).